The sequence spans 290 residues: Syntaxin-2 (290 aa).

The Cytoplasmic segment spans residues 1–266; that stretch reads MRDRLPDLTA…KYQSKARRKK (266 aa). Ser14 is modified (phosphoserine). The stretch at 69–106 forms a coiled coil; the sequence is EGKIKEELEDLNKEIKKTANRIRGKLKAIEQSCDQDEN. The t-SNARE coiled-coil homology domain maps to 193–255; sequence LNEIESRHKD…EHAKEETKKA (63 aa). Residues 267 to 290 form a helical; Anchor for type IV membrane protein membrane-spanning segment; sequence WIIAAVVVAVIAVLALIIGLTVGK.

Belongs to the syntaxin family. As to quaternary structure, interacts with SYT6 and SYT8; the interaction is Ca(2+)-dependent. Heart, spleen, liver, and testis.

The protein localises to the membrane. In terms of biological role, essential for epithelial morphogenesis. May mediate Ca(2+)-regulation of exocytosis acrosomal reaction in sperm. This is Syntaxin-2 (Stx2) from Rattus norvegicus (Rat).